We begin with the raw amino-acid sequence, 152 residues long: Superoxide dismutase [Cu-Zn] (152 aa).

Positions 45, 47, and 62 each coordinate Cu cation. An intrachain disulfide couples cysteine 56 to cysteine 145. Positions 62, 70, 79, and 82 each coordinate Zn(2+). Histidine 119 contacts Cu cation.

This sequence belongs to the Cu-Zn superoxide dismutase family. As to quaternary structure, homodimer. It depends on Cu cation as a cofactor. The cofactor is Zn(2+).

The protein localises to the cytoplasm. It carries out the reaction 2 superoxide + 2 H(+) = H2O2 + O2. Its function is as follows. Destroys radicals which are normally produced within the cells and which are toxic to biological systems. The protein is Superoxide dismutase [Cu-Zn] (SODCC) of Zantedeschia aethiopica (White calla lily).